The following is a 322-amino-acid chain: Probable arabinan endo-1,5-alpha-L-arabinosidase A (322 aa).

The N-terminal stretch at 1–19 is a signal peptide; sequence MYLPTLAASASLLVGVAHG. Residue D34 is the Proton acceptor of the active site. The Proton donor role is filled by E201.

It belongs to the glycosyl hydrolase 43 family.

It is found in the secreted. The enzyme catalyses Endohydrolysis of (1-&gt;5)-alpha-arabinofuranosidic linkages in (1-&gt;5)-arabinans.. It functions in the pathway glycan metabolism; L-arabinan degradation. In terms of biological role, endo-1,5-alpha-L-arabinanase involved in degradation of pectin. Its preferred substrate is linear 1,5-alpha-L-arabinan. This is Probable arabinan endo-1,5-alpha-L-arabinosidase A (abnA) from Emericella nidulans (strain FGSC A4 / ATCC 38163 / CBS 112.46 / NRRL 194 / M139) (Aspergillus nidulans).